Consider the following 274-residue polypeptide: Ribosomal RNA small subunit methyltransferase A (274 aa).

Residues Asn-17, Leu-19, Gly-44, Glu-65, Asp-89, and Asn-111 each coordinate S-adenosyl-L-methionine.

Belongs to the class I-like SAM-binding methyltransferase superfamily. rRNA adenine N(6)-methyltransferase family. RsmA subfamily.

It is found in the cytoplasm. It catalyses the reaction adenosine(1518)/adenosine(1519) in 16S rRNA + 4 S-adenosyl-L-methionine = N(6)-dimethyladenosine(1518)/N(6)-dimethyladenosine(1519) in 16S rRNA + 4 S-adenosyl-L-homocysteine + 4 H(+). In terms of biological role, specifically dimethylates two adjacent adenosines (A1518 and A1519) in the loop of a conserved hairpin near the 3'-end of 16S rRNA in the 30S particle. May play a critical role in biogenesis of 30S subunits. This is Ribosomal RNA small subunit methyltransferase A from Buchnera aphidicola subsp. Schizaphis graminum (strain Sg).